A 234-amino-acid polypeptide reads, in one-letter code: MAEPGPEPGRAWRVLALCGVAVFLAAAAAGGALVAWNLAASAARGPRCPEPGANATAPPGDPPPGVDDLRRRLAEAAEREEALARQLDQAESIRHELEKALKACEGRQSRLQTQLTTLKIEMDEAKAQGTQMGAENGALTEALARWEAAATESTRRLDEALRRAGVAEAEGEACAAREAALRERLNVLEAEMSPQRRVPRPRPRSGSRPRPSPRSRSRSGPSGGCRRPARRARG.

The signal sequence occupies residues 1–42 (MAEPGPEPGRAWRVLALCGVAVFLAAAAAGGALVAWNLAASA). 2 disordered regions span residues 44–67 (RGPRCPEPGANATAPPGDPPPGVD) and 187–234 (VLEA…RARG). Positions 66 to 163 (VDDLRRRLAE…TRRLDEALRR (98 aa)) form a coiled coil. Positions 187 to 196 (VLEAEMSPQR) are enriched in low complexity. The segment covering 197 to 217 (RVPRPRPRSGSRPRPSPRSRS) has biased composition (basic residues).

The polypeptide is Coiled-coil domain-containing protein 194 (Homo sapiens (Human)).